The sequence spans 500 residues: Cytochrome P450 2D3 (500 aa).

Cys446 contacts heme.

Belongs to the cytochrome P450 family. It depends on heme as a cofactor.

It is found in the endoplasmic reticulum membrane. The protein resides in the microsome membrane. It catalyses the reaction an organic molecule + reduced [NADPH--hemoprotein reductase] + O2 = an alcohol + oxidized [NADPH--hemoprotein reductase] + H2O + H(+). Its function is as follows. Cytochromes P450 are a group of heme-thiolate monooxygenases. In liver microsomes, this enzyme is involved in an NADPH-dependent electron transport pathway. It oxidizes a variety of structurally unrelated compounds, including steroids, fatty acids, and xenobiotics. The polypeptide is Cytochrome P450 2D3 (Cyp2d3) (Rattus norvegicus (Rat)).